We begin with the raw amino-acid sequence, 459 residues long: Diaminopimelate decarboxylase (459 aa).

Residue lysine 89 is modified to N6-(pyridoxal phosphate)lysine. Residues glycine 271 and 313-316 (EPGR) each bind pyridoxal 5'-phosphate. Substrate-binding residues include arginine 316, arginine 357, and tyrosine 361. The Proton donor role is filled by cysteine 388. Substrate is bound by residues glutamate 389 and tyrosine 418. Pyridoxal 5'-phosphate is bound at residue tyrosine 418.

This sequence belongs to the Orn/Lys/Arg decarboxylase class-II family. LysA subfamily. Homodimer. Requires pyridoxal 5'-phosphate as cofactor.

It carries out the reaction meso-2,6-diaminopimelate + H(+) = L-lysine + CO2. The protein operates within amino-acid biosynthesis; L-lysine biosynthesis via DAP pathway; L-lysine from DL-2,6-diaminopimelate: step 1/1. Specifically catalyzes the decarboxylation of meso-diaminopimelate (meso-DAP) to L-lysine. The sequence is that of Diaminopimelate decarboxylase from Corynebacterium efficiens (strain DSM 44549 / YS-314 / AJ 12310 / JCM 11189 / NBRC 100395).